Here is a 685-residue protein sequence, read N- to C-terminus: Amino acid transporter heavy chain SLC3A1 (685 aa).

Over residues 1-11 (MAEDKSKRDSI) the composition is skewed to basic and acidic residues. Positions 1–56 (MAEDKSKRDSIEMSMKGCQTNNGFVHNEDILEQTPDPGSSTDNLKHSTRGILGSQE) are disordered. At 1 to 87 (MAEDKSKRDS…GQARYRIPRE (87 aa)) the chain is on the cytoplasmic side. At S10 the chain carries Phosphoserine. A helical; Signal-anchor for type II membrane protein transmembrane segment spans residues 88 to 108 (ILFWLTVASVLVLIAATIAII). The Extracellular portion of the chain corresponds to 109-685 (ALSPKCLDWW…SVLNILYTSC (577 aa)). N214 contributes to the Ca(2+) binding site. N-linked (GlcNAc...) asparagine glycosylation is found at N214 and N261. Cysteines 242 and 273 form a disulfide. Ca(2+) is bound by residues D284, F318, L319, and E321. N332, N495, N513, and N575 each carry an N-linked (GlcNAc...) asparagine glycan. 2 disulfides stabilise this stretch: C571–C666 and C673–C685.

In terms of assembly, disulfide-linked heterodimer composed of the catalytic light subunit SLC7A9 and the heavy subunit SLC3A1. The heterodimer is the minimal functional unit. Assembles in non-covalently linked heterotetramers (dimers of heterodimers) and higher order oligomers; the oligomerization is mediated by SLC3A1 likely to prevent degradation in the endoplasmic reticulum and facilitate heteromer trafficking to the plasma membrane. Disulfide-linked heterodimer composed of the catalytic light subunit SLC7A13 and the heavy subunit SLC3A1. In terms of tissue distribution, expressed in the brush border membrane in the kidney (at protein level). Predominantly expressed in the kidney, small intestine and pancreas. Weakly expressed in liver.

The protein localises to the cell membrane. Its subcellular location is the apical cell membrane. Functionally, acts as a chaperone that facilitates biogenesis and trafficking of functional transporter heteromers to the plasma membrane. Associates with SLC7A9 to form a functional transporter complex that mediates the electrogenic exchange between cationic amino acids and neutral amino acids, with a stoichiometry of 1:1. SLC7A9-SLC3A1 transporter has system b(0,+)-like activity with high affinity for extracellular cationic amino acids and L-cystine and lower affinity for intracellular neutral amino acids. Substrate exchange is driven by high concentration of intracellular neutral amino acids and the intracellular reduction of L-cystine to L-cysteine. SLC7A9-SLC3A1 acts as a major transporter for reabsorption of L-cystine and dibasic amino acids across the brush border membrane in early proximal tubules. Associates with SLC7A13 to form a functional complex that transports anionic and neutral amino acids via exchange or facilitated diffusion. SLC7A13-SLC3A1 may act as a major transporter for L-cystine in late proximal tubules, ensuring its reabsorption from the luminal fluid in exchange for cytosolic L-glutamate or L-aspartate. The polypeptide is Amino acid transporter heavy chain SLC3A1 (Homo sapiens (Human)).